The following is a 298-amino-acid chain: MATH domain and coiled-coil domain-containing protein At3g58280 (298 aa).

Residues 9-128 (KKTFGWVIKD…NGEITIIAEV (120 aa)) enclose the MATH domain. Residues 240 to 288 (NLDWLRQKFDQALEKQIAYDTRIGELEKQVKKRKLAVTELEADLEKEKA) adopt a coiled-coil conformation.

This chain is MATH domain and coiled-coil domain-containing protein At3g58280, found in Arabidopsis thaliana (Mouse-ear cress).